The primary structure comprises 174 residues: Small ribosomal subunit protein uS5 (174 aa).

In terms of domain architecture, S5 DRBM spans 16 to 79; sequence FSELIVSVRR…NAARKNMIRV (64 aa).

Belongs to the universal ribosomal protein uS5 family. In terms of assembly, part of the 30S ribosomal subunit. Contacts proteins S4 and S8.

With S4 and S12 plays an important role in translational accuracy. Its function is as follows. Located at the back of the 30S subunit body where it stabilizes the conformation of the head with respect to the body. The polypeptide is Small ribosomal subunit protein uS5 (Ehrlichia ruminantium (strain Gardel)).